A 657-amino-acid polypeptide reads, in one-letter code: Pyoverdine export ATP-binding/permease protein PvdT (657 aa).

The ABC transporter domain maps to 6 to 245; that stretch reads IDLRNIRKSY…LSANAGALQA (240 aa). 43-50 is an ATP binding site; it reads GASGSGKS. Transmembrane regions (helical) follow at residues 285-305, 532-552, 590-610, and 620-640; these read ALTL…LAVG, LSLM…IGVM, LSVV…GILI, and LAAV…FGFM.

Belongs to the ABC transporter superfamily. Macrolide exporter (TC 3.A.1.122) family. Part of the tripartite efflux system PvdRT-OpmQ, which is composed of an inner membrane component with both ATPase and permease domains, PvdT, a periplasmic membrane fusion protein, PvdR, and an outer membrane component, OpmQ.

It localises to the cell inner membrane. Its function is as follows. Part of the tripartite efflux system PvdRT-OpmQ required for the secretion into the extracellular milieu of the siderophore pyoverdine (PVD), which is involved in iron acquisition. This subunit binds PVD and drives its secretion by hydrolyzing ATP. The system is responsible for export of newly synthesized PVD after the final steps of biosynthesis have taken place in the periplasm. It is also responsible for recycling of PVD after internalization of ferri-PVD into the periplasm by the outer-membrane receptor FpvA and release of iron from PVD, thus making PVD available for new cycles of iron uptake. The chain is Pyoverdine export ATP-binding/permease protein PvdT from Pseudomonas fluorescens (strain ATCC BAA-477 / NRRL B-23932 / Pf-5).